The chain runs to 71 residues: Small ribosomal subunit protein bS21 (71 aa).

The segment at 39–71 (EKPTQERKRKAAAAVKRQMRRTSRDVTKRKRLY) is disordered. A compositionally biased stretch (basic residues) spans 45 to 71 (RKRKAAAAVKRQMRRTSRDVTKRKRLY).

This sequence belongs to the bacterial ribosomal protein bS21 family.

This Xylella fastidiosa (strain M12) protein is Small ribosomal subunit protein bS21.